The sequence spans 501 residues: ATP synthase subunit alpha (501 aa).

Position 169–176 (Gly169–Thr176) interacts with ATP.

It belongs to the ATPase alpha/beta chains family. As to quaternary structure, F-type ATPases have 2 components, CF(1) - the catalytic core - and CF(0) - the membrane proton channel. CF(1) has five subunits: alpha(3), beta(3), gamma(1), delta(1), epsilon(1). CF(0) has three main subunits: a(1), b(2) and c(9-12). The alpha and beta chains form an alternating ring which encloses part of the gamma chain. CF(1) is attached to CF(0) by a central stalk formed by the gamma and epsilon chains, while a peripheral stalk is formed by the delta and b chains.

The protein localises to the cell inner membrane. The catalysed reaction is ATP + H2O + 4 H(+)(in) = ADP + phosphate + 5 H(+)(out). Produces ATP from ADP in the presence of a proton gradient across the membrane. The alpha chain is a regulatory subunit. The protein is ATP synthase subunit alpha of Campylobacter jejuni subsp. jejuni serotype O:6 (strain 81116 / NCTC 11828).